Reading from the N-terminus, the 851-residue chain is Putative mediator of RNA polymerase II transcription subunit 15 (851 aa).

Disordered regions lie at residues 79–212 (AQAG…NTVY) and 299–368 (QQQQ…NNTH). A compositionally biased stretch (low complexity) spans 98 to 141 (ITPLIQQPITPVQQQVPPQKQPQPVYNQQQNQQQNQNQYTTTYP). Residues 145–154 (TPQQSNTPPI) show a composition bias toward polar residues. Residues 155–212 (SNNNSNNNSNNNLNNNNNNNINNNNNNNNNNNNNNNNNNNNNNNNNNNNNNNNNNTVY) are compositionally biased toward low complexity. Positions 231 to 307 (QLYLQQQQQL…QQQQQQQHQQ (77 aa)) form a coiled coil. Positions 308 to 319 (PVQMPSGVTTNK) are enriched in polar residues. The segment covering 320–358 (QSPQPQNTPLTPQQQQQLLAAQQSHAQAQANQNQQLQNP) has biased composition (low complexity). Over residues 359-368 (KRISSTNNTH) the composition is skewed to polar residues. The stretch at 790-827 (LKDLESKMNKEFENSNDLNQLNNNINNNNNNNNSFSDN) forms a coiled coil.

This sequence belongs to the Mediator complex subunit 15 family. As to quaternary structure, component of the Mediator complex.

It localises to the cytoplasm. It is found in the nucleus. Its function is as follows. Component of the Mediator complex, a coactivator involved in the regulated transcription of nearly all RNA polymerase II-dependent genes. Mediator functions as a bridge to convey information from gene-specific regulatory proteins to the basal RNA polymerase II transcription machinery. Mediator is recruited to promoters by direct interactions with regulatory proteins and serves as a scaffold for the assembly of a functional preinitiation complex with RNA polymerase II and the general transcription factors. The chain is Putative mediator of RNA polymerase II transcription subunit 15 (med15) from Dictyostelium discoideum (Social amoeba).